The following is a 143-amino-acid chain: Transcriptional regulator MraZ (143 aa).

SpoVT-AbrB domains follow at residues 5 to 47 and 76 to 119; these read EYTH…PLIE and ACEC…DAER.

This sequence belongs to the MraZ family. Forms oligomers.

The protein resides in the cytoplasm. Its subcellular location is the nucleoid. The protein is Transcriptional regulator MraZ of Limosilactobacillus fermentum (strain NBRC 3956 / LMG 18251) (Lactobacillus fermentum).